Consider the following 427-residue polypeptide: POU domain protein CF1A (427 aa).

Disordered stretches follow at residues 39–77, 196–217, 288–309, and 390–427; these read YMQHHHHHHAAAAAAAHHQLPSSPSPNGQGNGGGLGLGS, HHHMGGGDRDAISGGEEDTPTS, TTGSPTSIDKIAAQGRKRKKRT, and HDMHGSPMGTHSHSHSPPMLSPQNMQSSAVAAHQLAAH. The segment covering 49–66 has biased composition (low complexity); it reads AAAAAAHHQLPSSPSPNG. The span at 67–77 shows a compositional bias: gly residues; the sequence is QGNGGGLGLGS. One can recognise a POU-specific domain in the interval 212 to 286; that stretch reads EDTPTSDDLE…LLQKWLEEAD (75 aa). Positions 304–363 form a DNA-binding region, homeobox; the sequence is KRKKRTSIEVSVKGALEQHFHKQPKPSAQEITSLADSLQLEKEVVRVWFCNRRQKEKRMT.

It belongs to the POU transcription factor family. Class-3 subfamily. Coexpressed with acj6 in overlapping subsets of neurons in the embryonic epidermis and central nervous system. First detected in the precursor of the tracheal pits and the stomodeal invagination and later in the peripheral nervous system.

The protein resides in the nucleus. In terms of biological role, binds to a DNA sequence element required for the expression of the dopa decarboxylase gene (Ddc) in specific dopaminergic neurons. Could also play an early role in specific ectodermal cells, and a subsequent role in the embryonic nervous system. This Drosophila melanogaster (Fruit fly) protein is POU domain protein CF1A (vvl).